Reading from the N-terminus, the 246-residue chain is Mast cell protease 1 (246 aa).

The first 18 residues, 1-18, serve as a signal peptide directing secretion; sequence MQALLFLMALLLPSGAGA. Positions 19–20 are cleaved as a propeptide — activation peptide; sequence EE. Positions 21–244 constitute a Peptidase S1 domain; it reads IIGGVEARPH…YVPWIKTVIN (224 aa). An intrachain disulfide couples C50 to C66. The active-site Charge relay system is the H65. A glycan (N-linked (GlcNAc...) asparagine) is linked at N102. Catalysis depends on D109, which acts as the Charge relay system. Disulfide bonds link C143-C208 and C174-C187. The active-site Charge relay system is the S202.

Belongs to the peptidase S1 family. Granzyme subfamily. In terms of tissue distribution, mucosal mast cells.

The protein resides in the secreted. It is found in the cytoplasmic granule. In terms of biological role, has a chymotrypsin-like activity. In Mus musculus (Mouse), this protein is Mast cell protease 1 (Mcpt1).